Consider the following 154-residue polypeptide: Mediator of RNA polymerase II transcription subunit 21 (154 aa).

The segment at 37–71 (GFERTGSQTPQQQVHQQQQLPQQQQQQQQPQQQED) is disordered. Residues 44–71 (QTPQQQVHQQQQLPQQQQQQQQPQQQED) are compositionally biased toward low complexity. A coiled-coil region spans residues 96-140 (SEESSIELQVQSLQRLEAENKESAEKLEEIVRKGELLLEKIQAAL).

The protein belongs to the Mediator complex subunit 21 family. In terms of assembly, component of the Mediator complex.

It localises to the nucleus. In terms of biological role, component of the Mediator complex, a coactivator involved in the regulated transcription of nearly all RNA polymerase II-dependent genes. Mediator functions as a bridge to convey information from gene-specific regulatory proteins to the basal RNA polymerase II transcription machinery. Mediator is recruited to promoters by direct interactions with regulatory proteins and serves as a scaffold for the assembly of a functional preinitiation complex with RNA polymerase II and the general transcription factors. This Anopheles gambiae (African malaria mosquito) protein is Mediator of RNA polymerase II transcription subunit 21 (MED21).